The sequence spans 2217 residues: Protein irg-7 (2217 aa).

The signal sequence occupies residues 1–16 (MRNWVLIAALAVICLA). EGF-like domains are found at residues 370 to 405 (SGSTCSQMLCANGGFLPTPTSDRCQCPEGFSGFHCQ) and 864 to 896 (TGTYCQNIICYNGGTASGDHCVCPPGYAGESCE). Disulfide bonds link cysteine 379–cysteine 393, cysteine 395–cysteine 404, cysteine 868–cysteine 873, cysteine 886–cysteine 895, cysteine 1212–cysteine 1312, cysteine 1285–cysteine 1304, cysteine 1508–cysteine 1521, and cysteine 1523–cysteine 1532. One can recognise a C-type lectin domain in the interval 1188–1313 (IGQYCIKFMA…CAEPRAFACQ (126 aa)). The 35-residue stretch at 1499–1533 (TGSRCTVPICVNGGTRNPDEATCSCPDGYEGPNCQ) folds into the EGF-like 3 domain. Residues 2016–2202 (DVVFMIDGSQ…NNQIKTIQQL (187 aa)) form the VWFA domain.

It localises to the secreted. Its function is as follows. Plays a role in innate immunity, probably via the atf-7 pathway, to confer resistance to pathogenic bacteria. May also play a role in the regulation of longevity. The protein is Protein irg-7 of Caenorhabditis elegans.